The chain runs to 397 residues: Phosphoglycerate kinase (397 aa).

Substrate contacts are provided by residues 25–27 (DLN), Arg-41, 64–67 (HLGR), Arg-118, and Arg-151. Residues Lys-202, Glu-324, and 350 to 353 (GGDT) each bind ATP.

This sequence belongs to the phosphoglycerate kinase family. As to quaternary structure, monomer.

It localises to the cytoplasm. The enzyme catalyses (2R)-3-phosphoglycerate + ATP = (2R)-3-phospho-glyceroyl phosphate + ADP. The protein operates within carbohydrate degradation; glycolysis; pyruvate from D-glyceraldehyde 3-phosphate: step 2/5. This is Phosphoglycerate kinase from Janthinobacterium sp. (strain Marseille) (Minibacterium massiliensis).